The following is a 167-amino-acid chain: uncharacterized protein (167 aa).

This is an uncharacterized protein from Aquifex aeolicus (strain VF5).